A 638-amino-acid polypeptide reads, in one-letter code: uncharacterized protein (638 aa).

The signal sequence occupies residues 1–31 (MKFIKFNDSTIDSFLFMMLTDLAKTLTKSEA). Composition is skewed to basic and acidic residues over residues 247–256 (EEKKAPKLSD), 273–284 (EEMPTWHRETEA), 301–310 (DLGKDASREG), and 329–342 (RKDYSKLEALESQK). Disordered regions lie at residues 247–285 (EEKKAPKLSDDITLPKQSDGDEDIHEEEMPTWHRETEAP) and 301–354 (DLGK…ADGK). The 188-residue stretch at 445-632 (FTLLVDCSAS…DVLYPLLKKL (188 aa)) folds into the VWFA domain.

This is an uncharacterized protein from Bacillus subtilis (strain 168).